Consider the following 812-residue polypeptide: Eukaryotic translation initiation factor 3 subunit C (812 aa).

The interval Met-1 to Lys-105 is disordered. Composition is skewed to acidic residues over residues Ser-17–Ser-40 and Ser-48–Ser-59. In terms of domain architecture, PCI spans Phe-607 to Glu-783.

Belongs to the eIF-3 subunit C family. In terms of assembly, component of the eukaryotic translation initiation factor 3 (eIF-3) complex.

It is found in the cytoplasm. Component of the eukaryotic translation initiation factor 3 (eIF-3) complex, which is involved in protein synthesis of a specialized repertoire of mRNAs and, together with other initiation factors, stimulates binding of mRNA and methionyl-tRNAi to the 40S ribosome. The eIF-3 complex specifically targets and initiates translation of a subset of mRNAs involved in cell proliferation. The sequence is that of Eukaryotic translation initiation factor 3 subunit C from Eremothecium gossypii (strain ATCC 10895 / CBS 109.51 / FGSC 9923 / NRRL Y-1056) (Yeast).